The sequence spans 156 residues: Cyanate hydratase (156 aa).

Catalysis depends on residues Arg-96, Glu-99, and Ser-122.

Belongs to the cyanase family.

It catalyses the reaction cyanate + hydrogencarbonate + 3 H(+) = NH4(+) + 2 CO2. Catalyzes the reaction of cyanate with bicarbonate to produce ammonia and carbon dioxide. The protein is Cyanate hydratase of Photorhabdus laumondii subsp. laumondii (strain DSM 15139 / CIP 105565 / TT01) (Photorhabdus luminescens subsp. laumondii).